A 253-amino-acid polypeptide reads, in one-letter code: Phycoerythrobilin:ferredoxin oxidoreductase (253 aa).

Belongs to the HY2 family.

The enzyme catalyses (3Z)-phycoerythrobilin + oxidized 2[4Fe-4S]-[ferredoxin] = 15,16-dihydrobiliverdin + reduced 2[4Fe-4S]-[ferredoxin] + 2 H(+). Its function is as follows. Catalyzes the two-electron reduction of the C2 and C3(1) diene system of 15,16-dihydrobiliverdin. This Prochlorococcus marinus (strain AS9601) protein is Phycoerythrobilin:ferredoxin oxidoreductase.